Reading from the N-terminus, the 597-residue chain is Alpha-1,2-mannosyltransferase MNN2 (597 aa).

Residues 1–6 (MIAKQK) lie on the Cytoplasmic side of the membrane. The chain crosses the membrane as a helical span at residues 7–27 (IKILIGVIIVIATYHFIVSSN). The Extracellular portion of the chain corresponds to 28–597 (VRSKDLSDLV…ETAEIPTVVS (570 aa)). Residues 39–89 (LGSSDKSTTENERPKNNIVTNNRLDNPPNEDIPHAEPDSPPQEPPKSGNKP) are disordered. The N-linked (GlcNAc...) asparagine glycan is linked to Asn-382.

The protein belongs to the MNN1/MNT family. Mn(2+) is required as a cofactor.

Its subcellular location is the golgi apparatus membrane. It participates in protein modification; protein glycosylation. Enzyme activity is regulated by iron. In terms of biological role, alpha-1,2-mannosyltransferase required for cell wall integrity. Responsible for addition of the first alpha-1,2-linked mannose to form the branches on the mannan backbone of oligosaccharides. Addition of alpha-1,2-mannose is required for stabilization of the alpha-1,6-mannose backbone and hence regulates mannan fibril length; and is important for both immune recognition and virulence. Promotes iron uptake and usage along the endocytosis pathway under iron-limiting conditions. The chain is Alpha-1,2-mannosyltransferase MNN2 (MNN2) from Candida albicans (strain SC5314 / ATCC MYA-2876) (Yeast).